Here is a 240-residue protein sequence, read N- to C-terminus: Poxin (240 aa).

Histidine 46 acts as the Proton donor in catalysis. Tyrosine 181 serves as the catalytic Shared with catalytic histidine of dimeric partner. Lysine 185 acts as the Proton acceptor; shared with catalytic histidine of dimeric partner in catalysis.

This sequence belongs to the poxin family. Homodimer.

It catalyses the reaction 2',3'-cGAMP + H2O = Gp(2'-5')Ap(3') + H(+). Nuclease that cleaves host 2',3'-cGAMP. The sequence is that of Poxin (p26) from Bombyx mori (Silk moth).